The primary structure comprises 807 residues: Probable dimethyl sulfoxide reductase chain YnfF (807 aa).

The segment at residues 1–45 (MKIHTTEALMKAEISRRSLMKTSALGSLALASSAFTLPFSQMVRA) is a signal peptide (tat-type signal). The 62-residue stretch at 52–113 (EKAVWSSCTV…SIRRRMNHPD (62 aa)) folds into the 4Fe-4S Mo/W bis-MGD-type domain. The [4Fe-4S] cluster site is built by cysteine 59, cysteine 63, cysteine 67, and cysteine 99. Serine 195 serves as a coordination point for Mo-bis(molybdopterin guanine dinucleotide).

Belongs to the prokaryotic molybdopterin-containing oxidoreductase family. In terms of assembly, the complex consists of three subunits: YnfF, the reductase; YnfG, an electron transfer protein, and YnfH, a membrane anchor protein. It depends on [4Fe-4S] cluster as a cofactor. Requires Mo-bis(molybdopterin guanine dinucleotide) as cofactor. Post-translationally, exported by the Tat system. The position of the signal peptide cleavage has not been experimentally proven. Can also be exported by the Sec system.

The protein resides in the cell membrane. In terms of biological role, terminal reductase during anaerobic growth on various sulfoxide and N-oxide compounds. This is Probable dimethyl sulfoxide reductase chain YnfF (ynfF) from Escherichia coli (strain K12).